Here is a 269-residue protein sequence, read N- to C-terminus: Auxin-responsive protein IAA26 (269 aa).

A compositionally biased stretch (basic and acidic residues) spans 25–40; that stretch reads YQEDKNNTDQEKKLEL. 2 disordered regions span residues 25–55 and 76–146; these read YQEDKNNTDQEKKLELRLGPPGGDEEDHSAI and CFNG…KQVE. The short motif at 38 to 42 is the EAR-like (transcriptional repression) element; it reads LELRL. 2 stretches are compositionally biased toward polar residues: residues 80–93 and 117–136; these read NHFSPSNKTTSVPH and LASTSSSKLGNESSHGGQIN. Residues 137–146 show a composition bias toward basic and acidic residues; sequence KSDDGEKQVE. In terms of domain architecture, PB1 spans 151 to 250; it reads GMFVKINMDG…SVKRLRVIKS (100 aa).

Belongs to the Aux/IAA family. As to quaternary structure, homodimers and heterodimers. Interacts with phytochrome A. Interacts with TPL.

It localises to the nucleus. Aux/IAA proteins are short-lived transcriptional factors that function as repressors of early auxin response genes at low auxin concentrations. Repression is thought to result from the interaction with auxin response factors (ARFs), proteins that bind to the auxin-responsive promoter element (AuxRE). Formation of heterodimers with ARF proteins may alter their ability to modulate early auxin response genes expression. In Arabidopsis thaliana (Mouse-ear cress), this protein is Auxin-responsive protein IAA26 (IAA26).